Here is a 175-residue protein sequence, read N- to C-terminus: RNA pyrophosphohydrolase (175 aa).

Residues 6–149 (GYRPNVGIVI…KRDVYRRVMK (144 aa)) form the Nudix hydrolase domain. Residues 38 to 59 (GGINPGETAEQAMYRELFEEVG) carry the Nudix box motif.

It belongs to the Nudix hydrolase family. RppH subfamily. It depends on a divalent metal cation as a cofactor.

Its function is as follows. Accelerates the degradation of transcripts by removing pyrophosphate from the 5'-end of triphosphorylated RNA, leading to a more labile monophosphorylated state that can stimulate subsequent ribonuclease cleavage. In Serratia proteamaculans (strain 568), this protein is RNA pyrophosphohydrolase.